The following is a 136-amino-acid chain: Ig heavy chain V region XIG8 (136 aa).

The first 18 residues, G1–S18, serve as a signal peptide directing secretion. Positions Q19–Q128 constitute an Ig-like domain.

The sequence is that of Ig heavy chain V region XIG8 from Xenopus laevis (African clawed frog).